A 339-amino-acid chain; its full sequence is MAPYQSFHIGLLGLALASVWPLSACAITPSFPPAVEQNQQVNGDRQEVQLAQNSDTYTFETFDPNSDEPKLNGKVEKGDVSASISYRQEKHDGYESWFPTVTVKFKNKIVATLEGSESPMPIALLQITDMDRDNPYPAVLFATYTGGAHCCNEVKVFTSNQNGSDWSVRDFGFFNGGPHPAEDLNNDGWDEYVEVDNRFLYLFSSYAGSAAPAQIWALQNGQVVDVSFEPSFQFIHRENAQSMEKDLPEIVAQDSEKNGFLAAYVANKALIGELDEGWQTMLKYYDRESDWGLTNCLEYDDQSNCLNEVKYDSYPDALRAFLVEAGYIEAKFEAENNTL.

The first 26 residues, M1–A26, serve as a signal peptide directing secretion.

Its subcellular location is the cellular thylakoid lumen. The sequence is that of Probable thylakoid lumen protein sll0997 from Synechocystis sp. (strain ATCC 27184 / PCC 6803 / Kazusa).